The sequence spans 747 residues: Protein Niban 2 (747 aa).

Glycine 2 is lipidated: N-myristoyl glycine. In terms of domain architecture, PH spans 68-192; the sequence is RIIFSGNLFQ…WQAVLQDCVR (125 aa). 2 positions are modified to phosphoserine: serine 568 and serine 574. Positions 589-747 are disordered; that stretch reads WGEQYGDGGD…EDSAGVQTEF (159 aa). Gly residues predominate over residues 593–602; that stretch reads YGDGGDGSDS. Serine 605, serine 626, serine 641, serine 645, serine 648, serine 667, serine 672, serine 683, serine 693, and serine 697 each carry phosphoserine. A compositionally biased stretch (basic and acidic residues) spans 708 to 722; it reads VDLEPPKPSDQETGE. Over residues 734-747 the composition is skewed to polar residues; that stretch reads HTTTEDSAGVQTEF.

It belongs to the Niban family. As apoptosis proceeds, degraded via an proteasome-independent pathway, probably by caspases.

Its subcellular location is the cytoplasm. The protein resides in the cytosol. The protein localises to the cell junction. It localises to the adherens junction. It is found in the membrane. Functionally, may play a role in apoptosis suppression. The polypeptide is Protein Niban 2 (Rattus norvegicus (Rat)).